The chain runs to 292 residues: Elongation factor Ts (292 aa).

The interval 80-83 (TDFV) is involved in Mg(2+) ion dislocation from EF-Tu.

This sequence belongs to the EF-Ts family.

The protein resides in the cytoplasm. Associates with the EF-Tu.GDP complex and induces the exchange of GDP to GTP. It remains bound to the aminoacyl-tRNA.EF-Tu.GTP complex up to the GTP hydrolysis stage on the ribosome. The protein is Elongation factor Ts of Cupriavidus taiwanensis (strain DSM 17343 / BCRC 17206 / CCUG 44338 / CIP 107171 / LMG 19424 / R1) (Ralstonia taiwanensis (strain LMG 19424)).